The following is a 322-amino-acid chain: uncharacterized protein (322 aa).

Residues 212-234 traverse the membrane as a helical segment; it reads VCALLVGAISVATAGAAFSIIIV.

The protein resides in the membrane. This is an uncharacterized protein from Rickettsia prowazekii (strain Madrid E).